The sequence spans 347 residues: Quinolinate synthase (347 aa).

Residues His-47 and Ser-68 each contribute to the iminosuccinate site. Position 113 (Cys-113) interacts with [4Fe-4S] cluster. Residues 139 to 141 (YAN) and Ser-156 each bind iminosuccinate. Cys-200 contacts [4Fe-4S] cluster. Iminosuccinate contacts are provided by residues 226-228 (HPE) and Thr-243. [4Fe-4S] cluster is bound at residue Cys-297.

This sequence belongs to the quinolinate synthase family. Type 1 subfamily. It depends on [4Fe-4S] cluster as a cofactor.

The protein resides in the cytoplasm. It carries out the reaction iminosuccinate + dihydroxyacetone phosphate = quinolinate + phosphate + 2 H2O + H(+). It functions in the pathway cofactor biosynthesis; NAD(+) biosynthesis; quinolinate from iminoaspartate: step 1/1. In terms of biological role, catalyzes the condensation of iminoaspartate with dihydroxyacetone phosphate to form quinolinate. This is Quinolinate synthase from Salmonella paratyphi A (strain ATCC 9150 / SARB42).